The chain runs to 625 residues: Chaperone protein HtpG (625 aa).

The tract at residues 1 to 332 (MSNKQNTAVQ…TEDLSLNVSR (332 aa)) is a; substrate-binding. A b region spans residues 333–545 (EIVQSSPVMS…KDAMDSQMER (213 aa)). The interval 546-625 (MMKMMQQEMP…ELIEAATLSR (80 aa)) is c.

This sequence belongs to the heat shock protein 90 family. In terms of assembly, homodimer.

It localises to the cytoplasm. Molecular chaperone. Has ATPase activity. The sequence is that of Chaperone protein HtpG from Chlorobium luteolum (strain DSM 273 / BCRC 81028 / 2530) (Pelodictyon luteolum).